A 197-amino-acid chain; its full sequence is ATP-dependent Clp protease proteolytic subunit (197 aa).

Catalysis depends on Ser98, which acts as the Nucleophile. His123 is a catalytic residue.

This sequence belongs to the peptidase S14 family. Fourteen ClpP subunits assemble into 2 heptameric rings which stack back to back to give a disk-like structure with a central cavity, resembling the structure of eukaryotic proteasomes.

The protein localises to the cytoplasm. It catalyses the reaction Hydrolysis of proteins to small peptides in the presence of ATP and magnesium. alpha-casein is the usual test substrate. In the absence of ATP, only oligopeptides shorter than five residues are hydrolyzed (such as succinyl-Leu-Tyr-|-NHMec, and Leu-Tyr-Leu-|-Tyr-Trp, in which cleavage of the -Tyr-|-Leu- and -Tyr-|-Trp bonds also occurs).. Functionally, cleaves peptides in various proteins in a process that requires ATP hydrolysis. Has a chymotrypsin-like activity. Plays a major role in the degradation of misfolded proteins. The chain is ATP-dependent Clp protease proteolytic subunit from Lysinibacillus sphaericus (strain C3-41).